The primary structure comprises 128 residues: UPF0102 protein KPN78578_35270 (128 aa).

The interval 1–20 (MAQVPAGKNRSGQLSKQTGD) is disordered.

The protein belongs to the UPF0102 family.

This chain is UPF0102 protein KPN78578_35270, found in Klebsiella pneumoniae subsp. pneumoniae (strain ATCC 700721 / MGH 78578).